The following is a 268-amino-acid chain: NAD kinase (268 aa).

The active-site Proton acceptor is Asp-45. Residues 45-46 (DG), 122-123 (NE), Arg-148, Asp-150, 161-166 (TAYGKS), Ala-185, and Gln-223 each bind NAD(+).

It belongs to the NAD kinase family. A divalent metal cation serves as cofactor.

Its subcellular location is the cytoplasm. The catalysed reaction is NAD(+) + ATP = ADP + NADP(+) + H(+). Functionally, involved in the regulation of the intracellular balance of NAD and NADP, and is a key enzyme in the biosynthesis of NADP. Catalyzes specifically the phosphorylation on 2'-hydroxyl of the adenosine moiety of NAD to yield NADP. This is NAD kinase from Latilactobacillus sakei subsp. sakei (strain 23K) (Lactobacillus sakei subsp. sakei).